The chain runs to 567 residues: Thiol:disulfide interchange protein DsbD (567 aa).

Residues 1–19 form the signal peptide; that stretch reads MAQRIFTLILLLCSTSAFA. Intrachain disulfides connect C122–C128 and C185–C307. 7 consecutive transmembrane segments (helical) span residues 170-192, 212-234, 246-268, 297-319, 326-348, 358-380, and 387-409; these read ALWA…MYPL, LAFI…VAAA, YVLI…LFTL, GAIA…LLYI, WLGG…LVTV, GPWM…VFLL, and AWGL…ITSL. Residues 435–567 form the Thioredoxin domain; it reads QDWAFGSPSA…FSAHLHDRQP (133 aa). C482 and C485 are joined by a disulfide.

Belongs to the thioredoxin family. DsbD subfamily.

It is found in the cell inner membrane. The enzyme catalyses [protein]-dithiol + NAD(+) = [protein]-disulfide + NADH + H(+). It carries out the reaction [protein]-dithiol + NADP(+) = [protein]-disulfide + NADPH + H(+). Required to facilitate the formation of correct disulfide bonds in some periplasmic proteins and for the assembly of the periplasmic c-type cytochromes. Acts by transferring electrons from cytoplasmic thioredoxin to the periplasm. This transfer involves a cascade of disulfide bond formation and reduction steps. The chain is Thiol:disulfide interchange protein DsbD from Salmonella typhi.